The sequence spans 1127 residues: Collagen alpha-2(I) chain (1127 aa).

Pro residues predominate over residues 1–16; sequence DGKPGLPGPAGPPGPP. The disordered stretch occupies residues 1 to 1017; the sequence is DGKPGLPGPA…GPAGPAGGGY (1017 aa). Low complexity-rich tracts occupy residues 171-191, 221-230, and 237-258; these read AGPAGPAGARGPAGPLGAAGP, EPGPNGAVGP, and PGNNGLNGAKGAAGTPGVAGAP. The span at 260 to 270 shows a compositional bias: pro residues; sequence FPGPRGGPGPQ. Residues 272–282 are compositionally biased toward low complexity; it reads PQGAAGQRGLA. Over residues 289–298 the composition is skewed to gly residues; that stretch reads GVKGDGGPKG. Low complexity-rich tracts occupy residues 326-345, 355-398, 436-449, and 461-473; these read ATGPAGNRGARGAPGSRGMP, AAGP…AGPA, APGPDGNNGATGAT, and QGAAGAPGFQGLP. Over residues 474-483 the composition is skewed to gly residues; sequence GPAGGAGEAG. The segment covering 508-518 has biased composition (low complexity); sequence NPGAAGASGPQ. Positions 531-568 are enriched in gly residues; the sequence is GTDGGKGEPGAAGAAGGPGHQGPGGMPGERGAAGGPGG. Over residues 569–580 the composition is skewed to basic and acidic residues; that stretch reads KGEKGEAGHRGP. Composition is skewed to low complexity over residues 611–625 and 634–647; these read SGSFGPAGPAGARGA and PAGAPGFAGPPGAD. A compositionally biased stretch (gly residues) spans 657-666; it reads GPSGGKGESG. Composition is skewed to low complexity over residues 667–692, 703–730, and 758–778; these read PSGPAGPAGQSGPPGASGPAGPTGAR, FPGAAGRVGAAGPAGLVGPPGSAGPAGK, and SGEKGPSGEPGTPGTSGPLGL. Residues 792-801 show a composition bias toward gly residues; it reads GSPGGAGAVG. Composition is skewed to low complexity over residues 802–824 and 860–872; these read EAGRVGPAGPAGARGAPGNLGLP and PGSSGAMGLAGAP. Residues 876–897 are compositionally biased toward gly residues; that stretch reads GPSGGAGRPGNRGESGPGGAAG. Over residues 898–913 the composition is skewed to low complexity; the sequence is AVGPAGARGAAGPSGP. The span at 914–928 shows a compositional bias: basic and acidic residues; that stretch reads RGEKGVAGEKGERGM. 2 stretches are compositionally biased toward low complexity: residues 937–956 and 986–997; these read LQGMPGPSGPSGDTGSAGPN and PGARGPPGYVGP. Positions 998 to 1010 are enriched in pro residues; it reads AGPPGXPGLPGPA. In terms of domain architecture, Fibrillar collagen NC1 spans 1093–1127; sequence RTNKPSRLPLLDLAPLDLGGADQEFGLDLGPVCFK.

The protein belongs to the fibrillar collagen family.

The protein resides in the secreted. The protein localises to the extracellular space. It localises to the extracellular matrix. In Epinephelus marginatus (Dusky grouper), this protein is Collagen alpha-2(I) chain.